The following is a 355-amino-acid chain: Eukaryotic initiation factor 4A-13 (355 aa).

The Q motif signature appears at 40 to 68 (DSFDAMGLQENLLRGIYAYGFEKPSAIQQ). Positions 71-241 (IVPFCKGLDV…RKFMNQPVRI (171 aa)) constitute a Helicase ATP-binding domain. 84-91 (AQSGTGKT) is an ATP binding site. A DEAD box motif is present at residues 189–192 (DEAD). A Helicase C-terminal domain is found at 252–355 (GIKQFYVNVD…QQVSLVINYD (104 aa)).

Belongs to the DEAD box helicase family. eIF4A subfamily. In terms of assembly, eIF4F is a multi-subunit complex, the composition of which varies with external and internal environmental conditions. It is composed of at least EIF4A, EIF4E and EIF4G.

The enzyme catalyses ATP + H2O = ADP + phosphate + H(+). ATP-dependent RNA helicase which is a subunit of the eIF4F complex involved in cap recognition and is required for mRNA binding to ribosome. In the current model of translation initiation, eIF4A unwinds RNA secondary structures in the 5'-UTR of mRNAs which is necessary to allow efficient binding of the small ribosomal subunit, and subsequent scanning for the initiator codon. This Nicotiana tabacum (Common tobacco) protein is Eukaryotic initiation factor 4A-13.